Here is a 448-residue protein sequence, read N- to C-terminus: Exodeoxyribonuclease 7 large subunit (448 aa).

This sequence belongs to the XseA family. As to quaternary structure, heterooligomer composed of large and small subunits.

The protein localises to the cytoplasm. The enzyme catalyses Exonucleolytic cleavage in either 5'- to 3'- or 3'- to 5'-direction to yield nucleoside 5'-phosphates.. Bidirectionally degrades single-stranded DNA into large acid-insoluble oligonucleotides, which are then degraded further into small acid-soluble oligonucleotides. The chain is Exodeoxyribonuclease 7 large subunit from Geobacillus kaustophilus (strain HTA426).